Consider the following 427-residue polypeptide: Diaminobutyrate--2-oxoglutarate transaminase (427 aa).

Lys269 is modified (N6-(pyridoxal phosphate)lysine).

Belongs to the class-III pyridoxal-phosphate-dependent aminotransferase family. The cofactor is pyridoxal 5'-phosphate.

The catalysed reaction is L-2,4-diaminobutanoate + 2-oxoglutarate = L-aspartate 4-semialdehyde + L-glutamate. It functions in the pathway amine and polyamine biosynthesis; ectoine biosynthesis; L-ectoine from L-aspartate 4-semialdehyde: step 1/3. Functionally, catalyzes reversively the conversion of L-aspartate beta-semialdehyde (ASA) to L-2,4-diaminobutyrate (DABA) by transamination with L-glutamate. In Marinococcus halophilus, this protein is Diaminobutyrate--2-oxoglutarate transaminase (ectB).